A 459-amino-acid chain; its full sequence is Flavin-containing monooxygenase FMO GS-OX1 (459 aa).

17–22 provides a ligand contact to FAD; the sequence is GAGAAG. 211–216 is an NADP(+) binding site; sequence GNYASG.

It belongs to the FMO family. FAD serves as cofactor. In terms of tissue distribution, mainly expressed in leaves. Low levels in flowers and seeds.

The catalysed reaction is a (Z)-omega-(methylsulfanyl)-N-sulfo-alkylhydroximate S-glucoside + NADPH + O2 + H(+) = a (Z)-omega-(methylsulfinyl)-alkyl-glucosinolate + NADP(+) + H2O. In terms of biological role, catalyzes the conversion of methylthioalkyl glucosinolates into methylsulfinylalkyl glucosinolates. Able to S-oxygenate both desulfo- and intact 4-methylthiobutyl glucosinolates, but no activity with methionine, dihomomethionine or 5-methylthiopentaldoxime. The protein is Flavin-containing monooxygenase FMO GS-OX1 (FMOGS-OX1) of Arabidopsis thaliana (Mouse-ear cress).